The following is a 150-amino-acid chain: Ribonuclease K6 (150 aa).

A signal peptide spans 1-23 (MVLCFPLLLLLLVLWGPVCLLHA). The active-site Proton acceptor is the H38. Disulfide bonds link C46-C104, C60-C114, C78-C129, and C85-C92. N55 carries an N-linked (GlcNAc...) asparagine glycan. Substrate contacts are provided by residues 61 to 65 (KHQNT) and K86. A glycan (N-linked (GlcNAc...) asparagine) is linked at N100. R105 serves as a coordination point for substrate. H145 serves as the catalytic Proton donor.

The protein belongs to the pancreatic ribonuclease family. As to quaternary structure, interacts (via N-terminus) with bacterial lipopolysaccharide (LPS).

The protein resides in the secreted. The protein localises to the lysosome. It localises to the cytoplasmic granule. Ribonuclease which shows a preference for the pyrimidines uridine and cytosine. Has potent antibacterial activity against a range of Gram-positive and Gram-negative bacteria, including P.aeruginosa, A.baumanii, M.luteus, S.aureus, E.faecalis, E.faecium, S.saprophyticus and E.coli. Causes loss of bacterial membrane integrity, and also promotes agglutination of Gram-negative bacteria. Probably contributes to urinary tract sterility. Bactericidal activity is independent of RNase activity. In Chlorocebus aethiops (Green monkey), this protein is Ribonuclease K6 (RNASE6).